The chain runs to 190 residues: Ion-translocating oxidoreductase complex subunit B (190 aa).

Residues 1 to 26 (MLTFWLAVATLSALALVAGAVLGFAA) form a hydrophobic region. Residues 32-90 (KTDPVAERIDALLPQSQCAQCGYPGCRPYAEAVAGGAPINKCVPGGEAVMLKIAAQLSV) enclose the 4Fe-4S domain. [4Fe-4S] cluster-binding residues include C49, C52, C57, C73, C115, C118, C121, C125, C145, C148, C151, and C155. 4Fe-4S ferredoxin-type domains follow at residues 106–135 (RVAW…GATR) and 136–165 (AVHT…MRPL).

The protein belongs to the 4Fe4S bacterial-type ferredoxin family. RnfB subfamily. As to quaternary structure, the complex is composed of six subunits: RnfA, RnfB, RnfC, RnfD, RnfE and RnfG. Requires [4Fe-4S] cluster as cofactor.

Its subcellular location is the cell inner membrane. Its function is as follows. Part of a membrane-bound complex that couples electron transfer with translocation of ions across the membrane. This chain is Ion-translocating oxidoreductase complex subunit B, found in Sodalis glossinidius (strain morsitans).